Consider the following 381-residue polypeptide: Endolytic peptidoglycan transglycosylase RlpA (381 aa).

An N-terminal signal peptide occupies residues M1–A19. C20 is lipidated: N-palmitoyl cysteine. The S-diacylglycerol cysteine moiety is linked to residue C20. The interval L196–A274 is disordered. The segment covering S208–G218 has biased composition (low complexity). An SPOR domain is found at A304–A380.

The protein belongs to the RlpA family.

The protein resides in the cell membrane. Its function is as follows. Lytic transglycosylase with a strong preference for naked glycan strands that lack stem peptides. This is Endolytic peptidoglycan transglycosylase RlpA from Salmonella typhimurium (strain LT2 / SGSC1412 / ATCC 700720).